We begin with the raw amino-acid sequence, 540 residues long: MLVMQLLLPFLASTAAAAAAIDSTSSSNGSDHHGSSFQAECESFKAKINVTNANVHSVTYVPAGVNISMADNPSICGGDEDPITSTFAFCRIALNVTTSSKSQIFMEAWLPSNYSGRFLSTGNGGLGGCVKYDDMAYAAGYGFATVGTNNGHFGNNGVSFYQNTEVVEDFAYRALHTGVVVGKELTKNFYPQGYNKSYYLGCSTGGRQGWKSVQTFPDDFDGVVAGAPAFNFINLTSWGARFLTLTGDSSAETFVTETQWTAVHNEIIRQCDSLDGAKDGIIEDPDLCQPIIEALLCNATQSSTSGTCLTGAQVKTVNGVFSATYGLNGSFLYPRMQPGSELAAYSSYYSGTPFAYAEDWYRYVVFNNTNWDVATWTVQDAAIANAQDPYQISTWNGDLSPFQKKGGKVLHYHGMEDAIISSESSKVYYKHVADTMNLSPSELDSFYRFFPISGMAHCANADGPSAIGQGTGTFAGNNPQDNVLLAMVQWVEEGVAPDFVRGAKLNGSTVEYRRKHCKYPKRNRYVGPGSYTDENAWECV.

The signal sequence occupies residues 1–18 (MLVMQLLLPFLASTAAAA). N-linked (GlcNAc...) asparagine glycans are attached at residues asparagine 28, asparagine 49, asparagine 66, asparagine 95, asparagine 113, and asparagine 195. 2 cysteine pairs are disulfide-bonded: cysteine 41–cysteine 90 and cysteine 76–cysteine 129. 3 disulfide bridges follow: cysteine 202–cysteine 458, cysteine 271–cysteine 288, and cysteine 297–cysteine 308. Residue serine 203 is the Acyl-ester intermediate of the active site. Asparagine 234 carries an N-linked (GlcNAc...) asparagine glycan. Aspartate 272, aspartate 275, alanine 277, aspartate 279, and isoleucine 281 together coordinate Ca(2+). Residues asparagine 298, asparagine 328, and asparagine 367 are each glycosylated (N-linked (GlcNAc...) asparagine). Residues aspartate 417 and histidine 457 each act as charge relay system in the active site. N-linked (GlcNAc...) asparagine glycosylation is present at asparagine 506. Cysteine 517 and cysteine 539 are oxidised to a cystine.

The protein belongs to the tannase family. In terms of assembly, homodimer.

Its subcellular location is the secreted. The enzyme catalyses feruloyl-polysaccharide + H2O = ferulate + polysaccharide.. Involved in degradation of plant cell walls. Hydrolyzes the feruloyl-arabinose ester bond in arabinoxylans as well as the feruloyl-galactose and feruloyl-arabinose ester bonds in pectin. The polypeptide is Probable feruloyl esterase B-1 (faeB-1) (Aspergillus oryzae (strain ATCC 42149 / RIB 40) (Yellow koji mold)).